The chain runs to 273 residues: LOB domain-containing protein 20 (273 aa).

Residues 1 to 15 (MADQQRGHNTSDSRR) show a composition bias toward basic and acidic residues. Residues 1-39 (MADQQRGHNTSDSRRKSLAGKRTSQQTPTSSLSSGGVSM) form a disordered region. Over residues 23 to 39 (TSQQTPTSSLSSGGVSM) the composition is skewed to low complexity. One can recognise an LOB domain in the interval 50–152 (SPCGACKFLR…AELSVVQSQL (103 aa)). Residues 221-248 (LEHSLQPMPPHQQRRGDYQHEDEEESGA) are disordered.

The protein belongs to the LOB domain-containing protein family. As to expression, expressed in roots and flowers.

The sequence is that of LOB domain-containing protein 20 (LBD20) from Arabidopsis thaliana (Mouse-ear cress).